We begin with the raw amino-acid sequence, 1465 residues long: DNA polymerase III PolC-type (1465 aa).

The 157-residue stretch at 427 to 583 (YVVFDVETTG…YDAEATGRLL (157 aa)) folds into the Exonuclease domain.

Belongs to the DNA polymerase type-C family. PolC subfamily.

It is found in the cytoplasm. It carries out the reaction DNA(n) + a 2'-deoxyribonucleoside 5'-triphosphate = DNA(n+1) + diphosphate. In terms of biological role, required for replicative DNA synthesis. This DNA polymerase also exhibits 3' to 5' exonuclease activity. The polypeptide is DNA polymerase III PolC-type (Streptococcus pyogenes serotype M1).